Here is a 419-residue protein sequence, read N- to C-terminus: MSRSAEVICVGTELLLGEVLNSNAQFLGQELARLGIAHFHQTVVGDNPTRIKRAIALACQRSQLLIFTGGLGPTPDDLTTETLADFFQAPLVNHPEILEDIARKFAQRNRVPSPSNDKQALLPDGAQILPNPIGSAPGIIWHPRPELTIFTFPGVPKEFHRMWQETAVPYLQSTGWVTAQIYSRVLRFWGIPESTLADQVAPLLALTNPTVAPYASKGQARLRISTRATSQETAHQVIAPIEQQIRQICGLHCFGGDDETLESVVGKLLQQRGETLAVAESCTGGGLGQRITGVSGSSTYFLGGVISYTNAAKRDLLKVNAADLEQYGAVSAIVAEQMAAGVRSQLHSTWGISITGIAGPDGGSETKPVGLVYIGLSGPQGTQSFEYQISPLRGRDWIRQMSTSHALDRLRRQLLADES.

The protein belongs to the CinA family.

The polypeptide is CinA-like protein (Acaryochloris marina (strain MBIC 11017)).